We begin with the raw amino-acid sequence, 463 residues long: Glucagon-like peptide 1 receptor (463 aa).

Residues 1-21 (MAVTPSLLRLALLLLGAVGRA) form the signal peptide. Residues 22 to 139 (GPRPQGATVS…KQGERNSPEE (118 aa)) are Extracellular-facing. Disulfide bonds link C46/C71, C62/C104, and C85/C126. Residues N63, N82, and N115 are each glycosylated (N-linked (GlcNAc...) asparagine). Residues 140 to 164 (QLLSLYIIYTVGYALSFSALVIASA) form a helical membrane-spanning segment. Topologically, residues 165–175 (ILVSFRHLHCT) are cytoplasmic. The helical transmembrane segment at 176–201 (RNYIHLNLFASFILRALSVFIKDAAL) threads the bilayer. Residues 202-227 (KWMYSTAAQQHQWDGLLSYQDSLGCR) are Extracellular-facing. Residues C226 and C296 are joined by a disulfide bond. The chain crosses the membrane as a helical span at residues 228–251 (LVFLLMQYCVAANYYWLLVEGVYL). At 252-265 (YTLLAFSVFSEQRI) the chain is on the cytoplasmic side. A helical transmembrane segment spans residues 266-290 (FKLYLSIGWGVPLLFVIPWGIVKYL). Residues 291–305 (YEDEGCWTRNSNMNY) are Extracellular-facing. The helical transmembrane segment at 306–328 (WLIIRLPILFAIGVNFLVFIRVI) threads the bilayer. The Cytoplasmic segment spans residues 329–348 (CIVIAKLKANLMCKTDIKCR). ADP-ribosylcysteine is present on C341. The residue at position 348 (R348) is an ADP-ribosylarginine. The chain crosses the membrane as a helical span at residues 349–370 (LAKSTLTLIPLLGTHEVIFAFV). The tract at residues 352-355 (STLT) is important for allosteric inhibitor binding. The Extracellular portion of the chain corresponds to 371-383 (MDEHARGTLRFVK). Residues 384–404 (LFTELSFTSFQGFMVAVLYCF) traverse the membrane as a helical segment. Over 405-463 (VNNEVQMEFRKSWERWRLERLNIQRDSSMKPLKCPTSSVSSGATVGSSVYAATCQNSCS) the chain is Cytoplasmic.

It belongs to the G-protein coupled receptor 2 family. May form homodimers and heterodimers with GIPR. Post-translationally, N-glycosylation enhances cell surface expression and lengthens receptor half-life by preventing degradation in the ER. As to expression, pancreatic islets, stomach, lung, rat insulinoma cell line.

The protein resides in the cell membrane. Its function is as follows. G-protein coupled receptor for glucagon-like peptide 1 (GLP-1). Ligand binding triggers activation of a signaling cascade that leads to the activation of adenylyl cyclase and increased intracellular cAMP levels. Plays a role in regulating insulin secretion in response to GLP-1. This is Glucagon-like peptide 1 receptor (Glp1r) from Rattus norvegicus (Rat).